We begin with the raw amino-acid sequence, 137 residues long: uncharacterized protein (137 aa).

Residues 31 to 83 (PASPINDKEKDKAGGRLPSGSEPRARAFCEAGADGEQGDPSPADTIKANQGHI) form a disordered region.

This is an uncharacterized protein from Homo sapiens (Human).